The chain runs to 142 residues: MSYSNILVAVAVTPESQQLLAKAVSIARPVKGHISLITLASDPEMYNQLAAPMLEDLRSVMQEETQSFLDKLIQDAGYPVDKTFIAYGELSEHILEVCRKYHFDLVICGNHNHSFFSRASCSAKRVIASSEVDVLLVPLTGD.

Belongs to the universal stress protein A family.

The protein localises to the cytoplasm. Functionally, required for resistance to DNA-damaging agents. The protein is Universal stress protein C (uspC) of Escherichia coli O157:H7.